The chain runs to 288 residues: Aquaporin PIP 1-3 (288 aa).

A disordered region spans residues 1-30 (MEGKEEDVRLGANRYTERQPIGTAAQGAEE). A run of 2 helical transmembrane segments spans residues 57–77 (IAEFVATFLFLYISILTVMGV) and 92–114 (IAWSFGGMIFALVYCTAGISGGH). The short motif at 116–118 (NPA) is the NPA 1 element. 3 helical membrane-spanning segments follow: residues 135-155 (VFYMAMQCLGAICGAGVVKGF), 177-197 (GDGLGAEIVGTFVLVYTVFSA), and 211-231 (ILAPLPIGFAVFLVHLATIPI). Residues 237-239 (NPA) carry the NPA 2 motif. A helical transmembrane segment spans residues 259–279 (IFWVGPFIGAALAAIYHVVVI).

The protein belongs to the MIP/aquaporin (TC 1.A.8) family. PIP (TC 1.A.8.11) subfamily. In terms of tissue distribution, expressed in roots and leaves.

It localises to the cell membrane. In terms of biological role, water channel required to facilitate the transport of water across cell membrane. Increases the capacity for root water uptake under water deficit. May play a role in drought avoidance in upland rice. The chain is Aquaporin PIP 1-3 (PIP1-3) from Oryza sativa subsp. japonica (Rice).